The chain runs to 360 residues: MTERDPIPTRHATRWLLQCRPGFGADLAAELAAWSSDAGVAGWPRVENDQGRVDFHSADGRPLPTPPALTFARQAWPVVADCPQLPERDRVGALLEALAPHLPEALAGVWLEHPDTNDGKALGRFCRKFRPHLERALRERGVALERAGAPRLHLWFADSRQVVAGLAPAGSGRPWPMGIPRLRLPRAAPSRSALKLEEAVGWLLTPVEREAALRPGMSAVDLGAAPGGWTWVLRQAGLHVTAVDNGPLAESLRADRAVRHLREDGFRYRPPHRVDWLVCDMVEQPHRVARLVRHWLVSGWCGRALFNLKLPMRRRWQCVAECRALVTGGSGELGWRSAQLYHDREEITVLAWRPAAGSRG.

S-adenosyl-L-methionine-binding positions include Ser192, 225 to 228, Asp244, Asp264, and Asp280; that span reads APGG. The active-site Proton acceptor is Lys309.

Belongs to the class I-like SAM-binding methyltransferase superfamily. RNA methyltransferase RlmE family. RlmM subfamily. In terms of assembly, monomer.

The protein resides in the cytoplasm. It catalyses the reaction cytidine(2498) in 23S rRNA + S-adenosyl-L-methionine = 2'-O-methylcytidine(2498) in 23S rRNA + S-adenosyl-L-homocysteine + H(+). In terms of biological role, catalyzes the 2'-O-methylation at nucleotide C2498 in 23S rRNA. In Alkalilimnicola ehrlichii (strain ATCC BAA-1101 / DSM 17681 / MLHE-1), this protein is Ribosomal RNA large subunit methyltransferase M.